The following is a 2894-amino-acid chain: uncharacterized protein (2894 aa).

A helical membrane pass occupies residues 8–28 (ISIFVFTILLLSNVSLGLNVS). PbH1 repeat units lie at residues 543–567 (EVRW…DISL), 2085–2107 (NYPL…SMLN), 2135–2156 (FGNI…VLYK), 2158–2180 (GNGI…YSKN), 2201–2223 (ISSI…LLEN), 2224–2244 (SSSS…YLKE), 2245–2266 (NYIS…EIVN), 2267–2289 (SSNV…AIFN), 2290–2311 (GENV…LSYG), 2341–2363 (LNNL…FIYS), 2367–2389 (ASNV…YIYG), 2390–2419 (VNAI…KISG), 2422–2444 (TKGV…SLEG), 2455–2477 (VENN…YIGG), 2479–2501 (VENV…LIQE), 2512–2542 (GTNI…TVGA), 2550–2582 (NGYI…EVYG), 2589–2611 (SLEF…LIGA), 2612–2633 (SKDI…TIPN), and 2638–2660 (PYNI…DLDD).

Its subcellular location is the membrane. This is an uncharacterized protein from Methanocaldococcus jannaschii (strain ATCC 43067 / DSM 2661 / JAL-1 / JCM 10045 / NBRC 100440) (Methanococcus jannaschii).